The chain runs to 452 residues: Membrane-bound acylglycerophosphatidylinositol O-acyltransferase mboa-7 (452 aa).

4 helical membrane passes run 4 to 24 (IIGL…FSFA), 53 to 73 (PRIA…AFAP), 79 to 99 (FYVF…HYFL), and 104 to 124 (VASH…GITF). The N-linked (GlcNAc...) asparagine glycan is linked to asparagine 137. A run of 3 helical transmembrane segments spans residues 153-173 (FAYF…YQML), 220-240 (AIWE…FVVF), and 244-264 (VYSA…GIYP). An N-linked (GlcNAc...) asparagine glycan is attached at asparagine 319. Histidine 350 is an active-site residue. A helical transmembrane segment spans residues 354–374 (AGYFMSFGVVAMCAILEDVIF). Asparagine 414 carries an N-linked (GlcNAc...) asparagine glycan. Residues 421–441 (FWSSIYYWLPLLCVPFYIYSV) traverse the membrane as a helical segment.

This sequence belongs to the membrane-bound acyltransferase family.

It localises to the membrane. It carries out the reaction a 1-acyl-sn-glycero-3-phospho-(1D-myo-inositol) + an acyl-CoA = a 1,2-diacyl-sn-glycero-3-phospho-(1D-myo-inositol) + CoA. The catalysed reaction is a fatty acyl-[ACP] + a 1-acyl-sn-glycero-3-phosphate = a 1,2-diacyl-sn-glycero-3-phosphate + holo-[ACP]. Its pathway is lipid metabolism; phospholipid metabolism. Its function is as follows. Acyltransferase which mediates the conversion of lysophosphatidylinositol (1-acylglycerophosphatidylinositol or LPI) into phosphatidylinositol (1,2-diacyl-sn-glycero-3-phosphoinositol or PI) (LPIAT activity). Prefers arachidonoyl-CoA or eicosapentaenoic acid (EPA) as the acyl donor. Prefers sn-2-LPI rather than sn-1-LPI as the acyl acceptor. Lysophospholipid acyltransferases (LPLATs) catalyze the reacylation step of the phospholipid remodeling pathway also known as the Lands cycle. The protein is Membrane-bound acylglycerophosphatidylinositol O-acyltransferase mboa-7 of Caenorhabditis briggsae.